A 441-amino-acid chain; its full sequence is Xaa-Pro dipeptidase (441 aa).

Mn(2+)-binding residues include Asp-244, Asp-255, His-336, Glu-381, and Glu-420.

It belongs to the peptidase M24B family. Bacterial-type prolidase subfamily. It depends on Mn(2+) as a cofactor.

It catalyses the reaction Xaa-L-Pro dipeptide + H2O = an L-alpha-amino acid + L-proline. Its function is as follows. Splits dipeptides with a prolyl residue in the C-terminal position. This is Xaa-Pro dipeptidase from Xanthomonas oryzae pv. oryzae (strain MAFF 311018).